The chain runs to 77 residues: Translational regulator CsrA (77 aa).

It belongs to the CsrA/RsmA family. Homodimer; the beta-strands of each monomer intercalate to form a hydrophobic core, while the alpha-helices form wings that extend away from the core.

Its subcellular location is the cytoplasm. Its function is as follows. A translational regulator that binds mRNA to regulate translation initiation and/or mRNA stability. Usually binds in the 5'-UTR at or near the Shine-Dalgarno sequence preventing ribosome-binding, thus repressing translation. Its main target seems to be the major flagellin gene, while its function is anatagonized by FliW. This chain is Translational regulator CsrA, found in Desulfitobacterium hafniense (strain DSM 10664 / DCB-2).